We begin with the raw amino-acid sequence, 337 residues long: MIEADRLISNSFESRDDEVIDRAIRPKLLNDYQGQDHVRGQMEIFIKAAQLREEALDHLLIFGPPGLGKTTLANIVANEMGVSIRTTSGPVLEKAGDLAALLTNLEPNDVLFIDEIHRLSPHVEEVLYPAMEDYQLDIMIGEGPAARSIKIDLPPFTLIGATTRAGSLTSPLRDRFGITQRLEYYKVDDLKDIVQRSANCLGLSMEEEGALEMAQRARGTPRIANRLLRRVRDYAEVVGNGIICSDTAKKALDMLDVDSSGFDYMDRKLLLAIIDKFMGGPVGLDNLAAAIGEEKDTIEDVLEPYLIQQGFLQRTPRGRIATHRAYLHFGLDIPEAR.

The tract at residues 4–185 (ADRLISNSFE…FGITQRLEYY (182 aa)) is large ATPase domain (RuvB-L). ATP contacts are provided by residues I24, R25, G66, K69, T70, T71, 132–134 (EDY), R175, Y185, and R222. T70 contributes to the Mg(2+) binding site. The tract at residues 186–256 (KVDDLKDIVQ…TAKKALDMLD (71 aa)) is small ATPAse domain (RuvB-S). The interval 259–337 (SSGFDYMDRK…HFGLDIPEAR (79 aa)) is head domain (RuvB-H). DNA is bound by residues R314 and R319.

This sequence belongs to the RuvB family. In terms of assembly, homohexamer. Forms an RuvA(8)-RuvB(12)-Holliday junction (HJ) complex. HJ DNA is sandwiched between 2 RuvA tetramers; dsDNA enters through RuvA and exits via RuvB. An RuvB hexamer assembles on each DNA strand where it exits the tetramer. Each RuvB hexamer is contacted by two RuvA subunits (via domain III) on 2 adjacent RuvB subunits; this complex drives branch migration. In the full resolvosome a probable DNA-RuvA(4)-RuvB(12)-RuvC(2) complex forms which resolves the HJ.

The protein resides in the cytoplasm. The catalysed reaction is ATP + H2O = ADP + phosphate + H(+). In terms of biological role, the RuvA-RuvB-RuvC complex processes Holliday junction (HJ) DNA during genetic recombination and DNA repair, while the RuvA-RuvB complex plays an important role in the rescue of blocked DNA replication forks via replication fork reversal (RFR). RuvA specifically binds to HJ cruciform DNA, conferring on it an open structure. The RuvB hexamer acts as an ATP-dependent pump, pulling dsDNA into and through the RuvAB complex. RuvB forms 2 homohexamers on either side of HJ DNA bound by 1 or 2 RuvA tetramers; 4 subunits per hexamer contact DNA at a time. Coordinated motions by a converter formed by DNA-disengaged RuvB subunits stimulates ATP hydrolysis and nucleotide exchange. Immobilization of the converter enables RuvB to convert the ATP-contained energy into a lever motion, pulling 2 nucleotides of DNA out of the RuvA tetramer per ATP hydrolyzed, thus driving DNA branch migration. The RuvB motors rotate together with the DNA substrate, which together with the progressing nucleotide cycle form the mechanistic basis for DNA recombination by continuous HJ branch migration. Branch migration allows RuvC to scan DNA until it finds its consensus sequence, where it cleaves and resolves cruciform DNA. This chain is Holliday junction branch migration complex subunit RuvB, found in Photobacterium profundum (strain SS9).